The following is a 209-amino-acid chain: Chloramphenicol acetyltransferase (209 aa).

His189 acts as the Proton acceptor in catalysis.

Belongs to the chloramphenicol acetyltransferase family. In terms of assembly, homotrimer.

The catalysed reaction is chloramphenicol + acetyl-CoA = chloramphenicol 3-acetate + CoA. This enzyme is an effector of chloramphenicol resistance in bacteria. This chain is Chloramphenicol acetyltransferase, found in Staphylococcus aureus.